A 482-amino-acid polypeptide reads, in one-letter code: U2 small nuclear ribonucleoprotein auxiliary factor 35 kDa subunit-related protein 2 (482 aa).

A disordered region spans residues 1–59 (MAAPEKMTFPEKPSHKKYRAALKKEKRKKRRQELARLRDSGLSQKEEEEDTFIEEQQLE). Basic residues predominate over residues 14 to 31 (SHKKYRAALKKEKRKKRR). Residue K45 forms a Glycyl lysine isopeptide (Lys-Gly) (interchain with G-Cter in SUMO2) linkage. Over residues 46 to 58 (EEEEDTFIEEQQL) the composition is skewed to acidic residues. Residue K62 forms a Glycyl lysine isopeptide (Lys-Gly) (interchain with G-Cter in SUMO2) linkage. Residues 115–135 (QRKEREEEEQKRQEKKEKEEA) form a disordered region. The segment at 166–194 (EKDRANCPFYSKTGACRFGDRCSRKHNFP) adopts a C3H1-type 1 zinc-finger fold. Positions 198–304 (PTLLIKSMFT…RQLQCEFCPV (107 aa)) constitute an RRM domain. The segment at 306–333 (RWKMAICGLFEIQQCPRGKHCNFLHVFR) adopts a C3H1-type 2 zinc-finger fold. S349 bears the Phosphoserine mark. The tract at residues 351–482 (DRTGSSFGKN…DRTVQSPKSK (132 aa)) is disordered. Basic and acidic residues-rich tracts occupy residues 360–375 (NSER…DYYS) and 383–398 (PSPD…SERK). A Phosphoserine modification is found at S384. Basic residues predominate over residues 399–412 (SSRHRGKKSHKRTS). Positions 413-435 (KSRERHNSRSRGRNRDRSRDRSR) are enriched in basic and acidic residues. Positions 436-454 (GRGSRSRSRSRSRRSRRSR) are enriched in basic residues.

In terms of assembly, component of the U11/U12 snRNPs that are part of the U12-type spliceosome. Interacts (via RS domain) with SRSF1 and SRSF2. Interacts with U2AF2/U2AF65. In terms of processing, phosphorylated in the RS domain by SRPK1. Widely expressed.

It localises to the nucleus. Pre-mRNA-binding protein required for splicing of both U2- and U12-type introns. Selectively interacts with the 3'-splice site of U2- and U12-type pre-mRNAs and promotes different steps in U2 and U12 intron splicing. Recruited to U12 pre-mRNAs in an ATP-dependent manner and is required for assembly of the pre-spliceosome, a precursor to other spliceosomal complexes. For U2-type introns, it is selectively and specifically required for the second step of splicing. This is U2 small nuclear ribonucleoprotein auxiliary factor 35 kDa subunit-related protein 2 (ZRSR2) from Homo sapiens (Human).